We begin with the raw amino-acid sequence, 187 residues long: Intermembrane transport lipoprotein PqiC (187 aa).

Positions 1–15 (MKKWLVTIAALWLAG) are cleaved as a signal peptide. Cys-16 carries the N-palmitoyl cysteine lipid modification. Cys-16 carries S-diacylglycerol cysteine lipidation.

May form a complex composed of PqiA, PqiB and PqiC. Interacts with PqiB.

It is found in the cell outer membrane. In terms of biological role, component of a transport pathway that contributes to membrane integrity. The chain is Intermembrane transport lipoprotein PqiC from Escherichia coli (strain K12).